The chain runs to 490 residues: Probable glycine dehydrogenase (decarboxylating) subunit 2 (490 aa).

Lys273 carries the post-translational modification N6-(pyridoxal phosphate)lysine.

The protein belongs to the GcvP family. C-terminal subunit subfamily. In terms of assembly, the glycine cleavage system is composed of four proteins: P, T, L and H. In this organism, the P 'protein' is a heterodimer of two subunits. Pyridoxal 5'-phosphate serves as cofactor.

It carries out the reaction N(6)-[(R)-lipoyl]-L-lysyl-[glycine-cleavage complex H protein] + glycine + H(+) = N(6)-[(R)-S(8)-aminomethyldihydrolipoyl]-L-lysyl-[glycine-cleavage complex H protein] + CO2. Functionally, the glycine cleavage system catalyzes the degradation of glycine. The P protein binds the alpha-amino group of glycine through its pyridoxal phosphate cofactor; CO(2) is released and the remaining methylamine moiety is then transferred to the lipoamide cofactor of the H protein. This is Probable glycine dehydrogenase (decarboxylating) subunit 2 from Staphylococcus aureus (strain Newman).